We begin with the raw amino-acid sequence, 345 residues long: N-acetyl-gamma-glutamyl-phosphate reductase (345 aa).

The active site involves C142.

It belongs to the NAGSA dehydrogenase family. Type 1 subfamily.

The protein localises to the cytoplasm. The enzyme catalyses N-acetyl-L-glutamate 5-semialdehyde + phosphate + NADP(+) = N-acetyl-L-glutamyl 5-phosphate + NADPH + H(+). Its pathway is amino-acid biosynthesis; L-arginine biosynthesis; N(2)-acetyl-L-ornithine from L-glutamate: step 3/4. Functionally, catalyzes the NADPH-dependent reduction of N-acetyl-5-glutamyl phosphate to yield N-acetyl-L-glutamate 5-semialdehyde. The protein is N-acetyl-gamma-glutamyl-phosphate reductase of Thermus thermophilus (strain ATCC BAA-163 / DSM 7039 / HB27).